The chain runs to 500 residues: Glycerol kinase (500 aa).

Threonine 13 is an ADP binding site. Residues threonine 13, threonine 14, and serine 15 each contribute to the ATP site. Residue threonine 13 coordinates sn-glycerol 3-phosphate. Residue arginine 17 participates in ADP binding. The sn-glycerol 3-phosphate site is built by arginine 83, glutamate 84, tyrosine 135, and aspartate 244. Glycerol contacts are provided by arginine 83, glutamate 84, tyrosine 135, aspartate 244, and glutamine 245. ADP is bound by residues threonine 266 and glycine 309. ATP contacts are provided by threonine 266, glycine 309, glutamine 313, and glycine 410. ADP-binding residues include glycine 410 and asparagine 414.

The protein belongs to the FGGY kinase family.

The enzyme catalyses glycerol + ATP = sn-glycerol 3-phosphate + ADP + H(+). Its pathway is polyol metabolism; glycerol degradation via glycerol kinase pathway; sn-glycerol 3-phosphate from glycerol: step 1/1. Inhibited by fructose 1,6-bisphosphate (FBP). Functionally, key enzyme in the regulation of glycerol uptake and metabolism. Catalyzes the phosphorylation of glycerol to yield sn-glycerol 3-phosphate. The sequence is that of Glycerol kinase from Burkholderia ambifaria (strain ATCC BAA-244 / DSM 16087 / CCUG 44356 / LMG 19182 / AMMD) (Burkholderia cepacia (strain AMMD)).